The chain runs to 97 residues: Citrate lyase acyl carrier protein (97 aa).

An O-(phosphoribosyl dephospho-coenzyme A)serine modification is found at serine 14.

It belongs to the CitD family. Oligomer with a subunit composition of (alpha,beta,gamma)6.

The protein localises to the cytoplasm. Covalent carrier of the coenzyme of citrate lyase. The chain is Citrate lyase acyl carrier protein from Oenococcus oeni (strain ATCC BAA-331 / PSU-1).